We begin with the raw amino-acid sequence, 358 residues long: Dynein axonemal assembly factor 10 (358 aa).

WD repeat units lie at residues 64–106 (EKPK…TPVY), 116–155 (NCIDGVGGVGIGEGAPEIVTGSRDGTVKVWDPRQKDTPVA), 163–206 (ETKR…VRWE), 208–250 (NIKN…PSKG), 258–298 (AHKS…QRSR), and 320–358 (LSTQPISSMDWSPDKKGLCVCTSFDQTVRVLIVTKLNKL).

As to quaternary structure, interacts with PIH1D1; the interaction associates DNAAF10 with the R2TP complex. Interacts with several dynein axonemal assembly factors.

The protein localises to the dynein axonemal particle. Key assembly factor specifically required for the stability of axonemal dynein heavy chains in cytoplasm. In Xenopus tropicalis (Western clawed frog), this protein is Dynein axonemal assembly factor 10 (dnaaf10).